Consider the following 205-residue polypeptide: Glycerol-3-phosphate acyltransferase (205 aa).

The next 5 helical transmembrane spans lie at 4-24, 56-76, 81-101, 112-132, and 138-158; these read IAPG…AILV, VAVL…AYAL, FWLG…VFFG, FGAI…TWLL, and GYSS…VWWF.

It belongs to the PlsY family. In terms of assembly, probably interacts with PlsX.

The protein localises to the cell inner membrane. It carries out the reaction an acyl phosphate + sn-glycerol 3-phosphate = a 1-acyl-sn-glycero-3-phosphate + phosphate. Its pathway is lipid metabolism; phospholipid metabolism. In terms of biological role, catalyzes the transfer of an acyl group from acyl-phosphate (acyl-PO(4)) to glycerol-3-phosphate (G3P) to form lysophosphatidic acid (LPA). This enzyme utilizes acyl-phosphate as fatty acyl donor, but not acyl-CoA or acyl-ACP. The protein is Glycerol-3-phosphate acyltransferase of Citrobacter koseri (strain ATCC BAA-895 / CDC 4225-83 / SGSC4696).